A 117-amino-acid polypeptide reads, in one-letter code: Large ribosomal subunit protein uL18 (117 aa).

Belongs to the universal ribosomal protein uL18 family. In terms of assembly, part of the 50S ribosomal subunit; part of the 5S rRNA/L5/L18/L25 subcomplex. Contacts the 5S and 23S rRNAs.

In terms of biological role, this is one of the proteins that bind and probably mediate the attachment of the 5S RNA into the large ribosomal subunit, where it forms part of the central protuberance. This is Large ribosomal subunit protein uL18 from Haemophilus influenzae (strain 86-028NP).